Here is a 236-residue protein sequence, read N- to C-terminus: TVP38/TMEM64 family membrane protein YdjX (236 aa).

5 helical membrane-spanning segments follow: residues 7–27 (FLFA…FGLF), 50–70 (LYIL…ILVI), 72–92 (GGIV…ATLA), 156–176 (IAFW…IVIY), and 192–212 (FILQ…LAKL). The tract at residues 73–183 (GIVFGPLLGT…VIYTVMASDL (111 aa)) is VTT domain.

It belongs to the TVP38/TMEM64 family.

Its subcellular location is the cell membrane. The sequence is that of TVP38/TMEM64 family membrane protein YdjX (ydjX) from Escherichia coli (strain K12).